We begin with the raw amino-acid sequence, 150 residues long: Small ribosomal subunit protein uS7cz/uS7cy (150 aa).

It belongs to the universal ribosomal protein uS7 family. Part of the 30S ribosomal subunit.

The protein resides in the plastid. It localises to the chloroplast. One of the primary rRNA binding proteins, it binds directly to 16S rRNA where it nucleates assembly of the head domain of the 30S subunit. This Adiantum capillus-veneris (Maidenhair fern) protein is Small ribosomal subunit protein uS7cz/uS7cy (rps7-A).